Consider the following 904-residue polypeptide: DNA replication licensing factor MCM2 (904 aa).

Low complexity predominate over residues 1–12; sequence MAESSESLSASS. The interval 1–166 is disordered; that stretch reads MAESSESLSA…ATEDGEEDEE (166 aa). A2 bears the N-acetylalanine mark. The tract at residues 2 to 257 is interaction with KAT7; that stretch reads AESSESLSAS…LPEAPAELLQ (256 aa). S12 and S21 each carry phosphoserine. T25 carries the phosphothreonine modification. S26, S27, and S32 each carry phosphoserine. A Phosphothreonine modification is found at T39. The residue at position 40 (S40) is a Phosphoserine; by CDC7. S41 is subject to Phosphoserine. S53 is subject to Phosphoserine; by CDC7. T59 carries the post-translational modification Phosphothreonine. An interaction with DNJC9 region spans residues 61 to 130; that stretch reads GPMEEEEDGE…DREAGRGLGR (70 aa). Positions 62-73 are enriched in acidic residues; that stretch reads PMEEEEDGEELI. The span at 76-85 shows a compositional bias: basic and acidic residues; that stretch reads GMERDYRPIP. Residues 88 to 104 show a composition bias toward acidic residues; the sequence is DVYEAEGLALDDEDVEE. The residue at position 108 (S108) is a Phosphoserine. Basic and acidic residues predominate over residues 111-125; the sequence is EAAERTMRQRDREAG. The residue at position 137 (Y137) is a Phosphotyrosine. Residues S139 and S140 each carry the phosphoserine modification. Residue K178 forms a Glycyl lysine isopeptide (Lys-Gly) (interchain with G-Cter in SUMO2) linkage. Position 216 is an N6-acetyllysine (K216). The segment at 329 to 355 adopts a C4-type zinc-finger fold; it reads CSKCNFVLGPFCQSQNQEVKPGSCPEC. Phosphoserine occurs at positions 381 and 484. The MCM domain maps to 473-680; that stretch reads IGEKIFASIA…QDEMLARFVV (208 aa). ADP contacts are provided by S530 and Q531. Residues 655 to 658 carry the Arginine finger motif; it reads SRFD.

This sequence belongs to the MCM family. As to quaternary structure, component of the MCM2-7 complex. The complex forms a toroidal hexameric ring with the proposed subunit order MCM2-MCM6-MCM4-MCM7-MCM3-MCM5. Component of the CMG helicase complex, a hexameric ring of related MCM2-7 subunits stabilized by CDC45 and the tetrameric GINS complex. Interacts with DBF4. Interacts with KAT7. May interact with MCM10. Component of the replisome complex composed of at least DONSON, MCM2, MCM7, PCNA and TICRR. Forms a co-chaperone complex with DNAJC9 and histone H3.3-H4 heterodimers. Within the complex, interacts (via N-terminus) with DNAJC9 (via C-terminus); the interaction is histone-dependent. Interacts with AGER/RAGE; the interaction is increased following DNA replication stress and stabilizes the MCM2-7 complex at replication forks. Phosphorylated on Ser-108 by ATR in proliferating cells. Ser-108 proliferation is increased by genotoxic agents. Ser-40 is mediated by the CDC7-DBF4 and CDC7-DBF4B complexes, while Ser-53 phosphorylation is only mediated by the CDC7-DBF4 complex. Phosphorylation by the CDC7-DBF4 complex during G1/S phase is required for the initiation of DNA replication. In terms of processing, acetylated by MCM3AP. Post-translationally, O-glycosylated (O-GlcNAcylated), in a cell cycle-dependent manner.

Its subcellular location is the nucleus. The protein localises to the chromosome. The enzyme catalyses ATP + H2O = ADP + phosphate + H(+). Acts as a component of the MCM2-7 complex (MCM complex) which is the replicative helicase essential for 'once per cell cycle' DNA replication initiation and elongation in eukaryotic cells. Core component of CDC45-MCM-GINS (CMG) helicase, the molecular machine that unwinds template DNA during replication, and around which the replisome is built. The active ATPase sites in the MCM2-7 ring are formed through the interaction surfaces of two neighboring subunits such that a critical structure of a conserved arginine finger motif is provided in trans relative to the ATP-binding site of the Walker A box of the adjacent subunit. The six ATPase active sites, however, are likely to contribute differentially to the complex helicase activity. Required for the entry in S phase and for cell division. Plays a role in terminally differentiated hair cells development of the cochlea and induces cells apoptosis. In Mus musculus (Mouse), this protein is DNA replication licensing factor MCM2 (Mcm2).